Here is a 199-residue protein sequence, read N- to C-terminus: Guanylate kinase (199 aa).

Residues 20-198 form the Guanylate kinase-like domain; that stretch reads GKLIVLTGPS…ALQAIEVALF (179 aa). Residue 27 to 34 coordinates ATP; sequence GPSGVGKG.

Belongs to the guanylate kinase family.

The protein resides in the cytoplasm. It catalyses the reaction GMP + ATP = GDP + ADP. Essential for recycling GMP and indirectly, cGMP. This is Guanylate kinase from Trichormus variabilis (strain ATCC 29413 / PCC 7937) (Anabaena variabilis).